Reading from the N-terminus, the 345-residue chain is AP2-like ethylene-responsive transcription factor At1g16060 (345 aa).

Residues 15 to 62 (TRQSKKTSVENETGDDQSATSVVLKAKRKRRSQPRDAPPQRSSVHRGV) are disordered. DNA-binding regions (AP2/ERF) lie at residues 58 to 124 (VHRG…LNFP) and 160 to 218 (KYRG…TNFD). The tract at residues 243–302 (HSDLSPFIKPNHESDLSQSQSSSEDNDDRKTKLLKSSPLVAEEVIGPSTPPEIAPPRRSF) is disordered.

Belongs to the AP2/ERF transcription factor family. AP2 subfamily.

The protein localises to the nucleus. Functionally, probably acts as a transcriptional activator. Binds to the GCC-box pathogenesis-related promoter element. May be involved in the regulation of gene expression by stress factors and by components of stress signal transduction pathways. This Arabidopsis thaliana (Mouse-ear cress) protein is AP2-like ethylene-responsive transcription factor At1g16060.